The following is a 254-amino-acid chain: Acetylglutamate kinase (254 aa).

Substrate contacts are provided by residues 40–41 (GG), R62, and N158.

The protein belongs to the acetylglutamate kinase family. ArgB subfamily.

It localises to the cytoplasm. The catalysed reaction is N-acetyl-L-glutamate + ATP = N-acetyl-L-glutamyl 5-phosphate + ADP. It participates in amino-acid biosynthesis; L-arginine biosynthesis; N(2)-acetyl-L-ornithine from L-glutamate: step 2/4. Catalyzes the ATP-dependent phosphorylation of N-acetyl-L-glutamate. In Chloroflexus aggregans (strain MD-66 / DSM 9485), this protein is Acetylglutamate kinase.